Reading from the N-terminus, the 179-residue chain is ATP-dependent protease subunit HslV (179 aa).

The active site involves T7. 3 residues coordinate Na(+): G162, C165, and T168.

Belongs to the peptidase T1B family. HslV subfamily. As to quaternary structure, a double ring-shaped homohexamer of HslV is capped on each side by a ring-shaped HslU homohexamer. The assembly of the HslU/HslV complex is dependent on binding of ATP.

It localises to the cytoplasm. The enzyme catalyses ATP-dependent cleavage of peptide bonds with broad specificity.. With respect to regulation, allosterically activated by HslU binding. In terms of biological role, protease subunit of a proteasome-like degradation complex believed to be a general protein degrading machinery. This chain is ATP-dependent protease subunit HslV, found in Bordetella bronchiseptica (strain ATCC BAA-588 / NCTC 13252 / RB50) (Alcaligenes bronchisepticus).